We begin with the raw amino-acid sequence, 139 residues long: D-ribose pyranase (139 aa).

Catalysis depends on His-20, which acts as the Proton donor. Substrate is bound by residues Asp-28, His-106, and 128-130 (YAN).

It belongs to the RbsD / FucU family. RbsD subfamily. In terms of assembly, homodecamer.

The protein localises to the cytoplasm. The enzyme catalyses beta-D-ribopyranose = beta-D-ribofuranose. It participates in carbohydrate metabolism; D-ribose degradation; D-ribose 5-phosphate from beta-D-ribopyranose: step 1/2. Catalyzes the interconversion of beta-pyran and beta-furan forms of D-ribose. The polypeptide is D-ribose pyranase (Actinobacillus succinogenes (strain ATCC 55618 / DSM 22257 / CCUG 43843 / 130Z)).